A 346-amino-acid polypeptide reads, in one-letter code: S-adenosylmethionine:tRNA ribosyltransferase-isomerase (346 aa).

It belongs to the QueA family. Monomer.

The protein resides in the cytoplasm. It carries out the reaction 7-aminomethyl-7-carbaguanosine(34) in tRNA + S-adenosyl-L-methionine = epoxyqueuosine(34) in tRNA + adenine + L-methionine + 2 H(+). It functions in the pathway tRNA modification; tRNA-queuosine biosynthesis. Transfers and isomerizes the ribose moiety from AdoMet to the 7-aminomethyl group of 7-deazaguanine (preQ1-tRNA) to give epoxyqueuosine (oQ-tRNA). The polypeptide is S-adenosylmethionine:tRNA ribosyltransferase-isomerase (Cereibacter sphaeroides (strain KD131 / KCTC 12085) (Rhodobacter sphaeroides)).